Reading from the N-terminus, the 257-residue chain is Adenylate kinase (257 aa).

Glycine 52–threonine 57 contacts ATP. Residues alanine 72–valine 101 are NMP. AMP is bound by residues threonine 73, arginine 78, glycine 99–valine 101, glycine 128–arginine 131, and glutamine 135. An LID region spans residues glycine 169–aspartate 206. Residues arginine 170 and serine 179–tyrosine 180 each bind ATP. The AMP site is built by arginine 203 and arginine 214. Position 242 (glutamine 242) interacts with ATP.

The protein belongs to the adenylate kinase family. AK2 subfamily. As to quaternary structure, monomer.

It localises to the cytoplasm. The protein localises to the cytosol. It is found in the mitochondrion intermembrane space. The enzyme catalyses AMP + ATP = 2 ADP. In terms of biological role, catalyzes the reversible transfer of the terminal phosphate group between ATP and AMP. Plays an important role in cellular energy homeostasis and in adenine nucleotide metabolism. Adenylate kinase activity is critical for regulation of the phosphate utilization and the AMP de novo biosynthesis pathways. The sequence is that of Adenylate kinase (adk1) from Neosartorya fischeri (strain ATCC 1020 / DSM 3700 / CBS 544.65 / FGSC A1164 / JCM 1740 / NRRL 181 / WB 181) (Aspergillus fischerianus).